The following is a 93-amino-acid chain: Putative defensin-like protein 283 (93 aa).

Residues 1–24 (MTKIGFYLATYATIYIILSPGLLA) form the signal peptide. 3 cysteine pairs are disulfide-bonded: C43–C83, C66–C90, and C72–C92.

The protein belongs to the DEFL family.

It localises to the secreted. The polypeptide is Putative defensin-like protein 283 (Arabidopsis thaliana (Mouse-ear cress)).